A 229-amino-acid chain; its full sequence is Large ribosomal RNA subunit accumulation protein YCED homolog 2, chloroplastic (229 aa).

The N-terminal 42 residues, 1–42, are a transit peptide targeting the chloroplast; that stretch reads MDVRCLISPNLLNSKIKVSGNTHHLPFSSLSKKHQASSPIQA.

It belongs to the DUF177 domain family.

It is found in the plastid. The protein resides in the chloroplast. Functionally, may play a role in synthesis, processing and/or stability of 23S rRNA. This Arabidopsis thaliana (Mouse-ear cress) protein is Large ribosomal RNA subunit accumulation protein YCED homolog 2, chloroplastic.